A 394-amino-acid chain; its full sequence is Protein-glutamate methylesterase/protein-glutamine glutaminase of group 2 operon (394 aa).

The region spanning 21–139 (RVMVVDDSAV…ELTGADTFKR (119 aa)) is the Response regulatory domain. D72 bears the 4-aspartylphosphate mark. Positions 148 to 201 (LGAAARRSGPRREGTAAARPPGAAAQPTSGYTLPSPVRAKPETGPLTVRPLPPD) are disordered. The span at 162–172 (TAAARPPGAAA) shows a compositional bias: low complexity. A CheB-type methylesterase domain is found at 200–382 (PDGRPDVIAI…SAILPLKEIG (183 aa)). Catalysis depends on residues S212, H238, and D334.

Belongs to the CheB family. In terms of processing, phosphorylated by CheA. Phosphorylation of the N-terminal regulatory domain activates the methylesterase activity.

The protein resides in the cytoplasm. The catalysed reaction is [protein]-L-glutamate 5-O-methyl ester + H2O = L-glutamyl-[protein] + methanol + H(+). It catalyses the reaction L-glutaminyl-[protein] + H2O = L-glutamyl-[protein] + NH4(+). In terms of biological role, involved in chemotaxis. Part of a chemotaxis signal transduction system that modulates chemotaxis in response to various stimuli. Catalyzes the demethylation of specific methylglutamate residues introduced into the chemoreceptors (methyl-accepting chemotaxis proteins or MCP) by CheR. Also mediates the irreversible deamidation of specific glutamine residues to glutamic acid. The protein is Protein-glutamate methylesterase/protein-glutamine glutaminase of group 2 operon of Rhodospirillum centenum (strain ATCC 51521 / SW).